A 460-amino-acid chain; its full sequence is Ammonium transporter 1 member 3 (460 aa).

The next 10 membrane-spanning stretches (helical) occupy residues 15–37, 50–72, 98–117, 124–146, 166–188, 209–227, 255–277, 305–327, 337–356, and 377–399; these read AIYL…MLCA, LTNV…AFAF, FFLY…SGSI, TAYL…HWLW, IDFA…GSIV, NATL…WFGF, AVTT…RLLV, PWAA…ILAL, AAQL…GLFA, and GLIL…SIVV.

Belongs to the ammonia transporter channel (TC 1.A.11.2) family. Leaves.

The protein resides in the membrane. Ammonium transporter that may be involved in ammonium transport throughout the plant. This Solanum lycopersicum (Tomato) protein is Ammonium transporter 1 member 3 (AMT1-3).